A 795-amino-acid polypeptide reads, in one-letter code: Phenylalanine--tRNA ligase beta subunit (795 aa).

In terms of domain architecture, tRNA-binding spans 39-148; that stretch reads AGSFNGVVVG…ADAPLGTDIR (110 aa). The B5 domain occupies 401-476; it reads PKRATITLRR…RVYGYNNIPD (76 aa). Mg(2+) contacts are provided by D454, D460, E463, and E464. The 94-residue stretch at 701 to 794 folds into the FDX-ACB domain; sequence SRFPANRRDI…LKERFQASLR (94 aa).

The protein belongs to the phenylalanyl-tRNA synthetase beta subunit family. Type 1 subfamily. As to quaternary structure, tetramer of two alpha and two beta subunits. It depends on Mg(2+) as a cofactor.

Its subcellular location is the cytoplasm. It carries out the reaction tRNA(Phe) + L-phenylalanine + ATP = L-phenylalanyl-tRNA(Phe) + AMP + diphosphate + H(+). The sequence is that of Phenylalanine--tRNA ligase beta subunit from Salmonella paratyphi A (strain ATCC 9150 / SARB42).